The primary structure comprises 406 residues: Multifunctional CCA protein (406 aa).

2 residues coordinate ATP: G8 and R11. G8 and R11 together coordinate CTP. Mg(2+) contacts are provided by D21 and D23. 3 residues coordinate ATP: R91, R138, and R141. The CTP site is built by R91, R138, and R141. The HD domain maps to 229–331; that stretch reads TGIHQEMVSD…LELLGRCDAL (103 aa).

The protein belongs to the tRNA nucleotidyltransferase/poly(A) polymerase family. Bacterial CCA-adding enzyme type 1 subfamily. In terms of assembly, monomer. Can also form homodimers and oligomers. It depends on Mg(2+) as a cofactor. Requires Ni(2+) as cofactor.

The catalysed reaction is a tRNA precursor + 2 CTP + ATP = a tRNA with a 3' CCA end + 3 diphosphate. It catalyses the reaction a tRNA with a 3' CCA end + 2 CTP + ATP = a tRNA with a 3' CCACCA end + 3 diphosphate. Its function is as follows. Catalyzes the addition and repair of the essential 3'-terminal CCA sequence in tRNAs without using a nucleic acid template. Adds these three nucleotides in the order of C, C, and A to the tRNA nucleotide-73, using CTP and ATP as substrates and producing inorganic pyrophosphate. tRNA 3'-terminal CCA addition is required both for tRNA processing and repair. Also involved in tRNA surveillance by mediating tandem CCA addition to generate a CCACCA at the 3' terminus of unstable tRNAs. While stable tRNAs receive only 3'-terminal CCA, unstable tRNAs are marked with CCACCA and rapidly degraded. The chain is Multifunctional CCA protein from Stenotrophomonas maltophilia (strain K279a).